We begin with the raw amino-acid sequence, 1279 residues long: ATP-dependent helicase/nuclease subunit A (1279 aa).

The 496-residue stretch at 4-499 (TKWTDEQRQA…VKLFKNFRSR (496 aa)) folds into the UvrD-like helicase ATP-binding domain. 25–32 (AGAGAGKT) contacts ATP. Positions 526–853 (EEALKVGASY…RIMSIHKSKG (328 aa)) constitute a UvrD-like helicase C-terminal domain.

This sequence belongs to the helicase family. AddA subfamily. As to quaternary structure, heterodimer of AddA and AddB/RexB. Mg(2+) is required as a cofactor.

The enzyme catalyses Couples ATP hydrolysis with the unwinding of duplex DNA by translocating in the 3'-5' direction.. It carries out the reaction ATP + H2O = ADP + phosphate + H(+). Functionally, the heterodimer acts as both an ATP-dependent DNA helicase and an ATP-dependent, dual-direction single-stranded exonuclease. Recognizes the chi site generating a DNA molecule suitable for the initiation of homologous recombination. The AddA nuclease domain is required for chi fragment generation; this subunit has the helicase and 3' -&gt; 5' nuclease activities. This Clostridium botulinum (strain Kyoto / Type A2) protein is ATP-dependent helicase/nuclease subunit A.